The following is a 78-amino-acid chain: Apolipoprotein C-I (78 aa).

Residues 1–26 (MRLILCLPVLVVVLLMVLEGPAPAQG) form the signal peptide.

It belongs to the apolipoprotein C1 family.

The protein localises to the secreted. Functionally, inhibitor of lipoprotein binding to the low density lipoprotein (LDL) receptor, LDL receptor-related protein, and very low density lipoprotein (VLDL) receptor. Associates with high density lipoproteins (HDL) and the triacylglycerol-rich lipoproteins in the plasma and makes up about 10% of the protein of the VLDL and 2% of that of HDL. Appears to interfere directly with fatty acid uptake and is also the major plasma inhibitor of cholesteryl ester transfer protein (CETP). Binds free fatty acids and reduces their intracellular esterification. Modulates the interaction of APOE with beta-migrating VLDL and inhibits binding of beta-VLDL to the LDL receptor-related protein. The sequence is that of Apolipoprotein C-I (APOC1) from Acinonyx jubatus (Cheetah).